A 485-amino-acid chain; its full sequence is NADH-quinone oxidoreductase subunit N (485 aa).

The next 14 membrane-spanning stretches (helical) occupy residues 8 to 28, 35 to 55, 71 to 91, 105 to 125, 127 to 147, 159 to 179, 203 to 223, 235 to 255, 271 to 291, 297 to 317, 326 to 346, 373 to 393, 408 to 430, and 455 to 475; these read LIALLPLLIVGLTVVVVMLSI, FLNATLSVIGLNAALVSLWFV, GFAMLYTGLVLLASLATCTFA, FYLLVLIAALGGILLANANHL, SLFLGIELISLPLFGLVGYAF, YTILSAAASSFLLFGMALVYA, LLAGFGLMIVGLGFKLSLVPF, PAPVSTFLATASKIAIFGVVM, VVLAIIAFASIIFGNLMALSQ, LLGYSSISHLGYLLVALIALQ, VGVYLAGYLFSSLGAFGVVSL, AAVMTVMMLSLAGIPMTLGFI, WWLVGAVVVGSASGLYYYLRVAV, and IVVLISALLVLVLGVWPQPLI.

Belongs to the complex I subunit 2 family. As to quaternary structure, NDH-1 is composed of 13 different subunits. Subunits NuoA, H, J, K, L, M, N constitute the membrane sector of the complex.

It localises to the cell inner membrane. It carries out the reaction a quinone + NADH + 5 H(+)(in) = a quinol + NAD(+) + 4 H(+)(out). In terms of biological role, NDH-1 shuttles electrons from NADH, via FMN and iron-sulfur (Fe-S) centers, to quinones in the respiratory chain. The immediate electron acceptor for the enzyme in this species is believed to be ubiquinone. Couples the redox reaction to proton translocation (for every two electrons transferred, four hydrogen ions are translocated across the cytoplasmic membrane), and thus conserves the redox energy in a proton gradient. The protein is NADH-quinone oxidoreductase subunit N of Shigella sonnei (strain Ss046).